We begin with the raw amino-acid sequence, 294 residues long: RNA polymerase sigma-K factor (294 aa).

Positions 1 to 20 (MVTGVFAALGFVVKELVFLV) are excised as a propeptide. The interval 1–156 (MVTGVFAALG…VNNCFFIFKS (156 aa)) is encoded by spoIVCB. The Polymerase core binding motif lies at 79–92 (DLISIGTIGLIKGI). The interval 114 to 165 (EIVITKGGCIHPSLIRFNIYGVRIHNGNFFHDKVNNCFFIFKSMPPLFVMNN) is not present in recombined mature factor. Positions 157-294 (MPPLFVMNNE…KEKRKKAKGK (138 aa)) are encoded by spoIIIC. The H-T-H motif DNA-binding region spans 251–270 (QREIAKELGISRSYVSRIEK).

This sequence belongs to the sigma-70 factor family.

Sigma factors are initiation factors that promote the attachment of RNA polymerase to specific initiation sites and are then released. This sigma factor is responsible for the expression of sporulation specific genes in the mother cell. The protein is RNA polymerase sigma-K factor (sigK) of Bacillus subtilis (strain 168).